A 211-amino-acid chain; its full sequence is tRNA (guanine-N(7)-)-methyltransferase (211 aa).

Residues Glu-44, Asp-69, Asp-96, and Asp-118 each coordinate S-adenosyl-L-methionine. The active site involves Asp-118. Lys-122 is a substrate binding site. The segment at 124–129 (KHEKRR) is interaction with RNA. Residues Asp-154 and 191–194 (TEYE) each bind substrate.

It belongs to the class I-like SAM-binding methyltransferase superfamily. TrmB family.

It catalyses the reaction guanosine(46) in tRNA + S-adenosyl-L-methionine = N(7)-methylguanosine(46) in tRNA + S-adenosyl-L-homocysteine. Its pathway is tRNA modification; N(7)-methylguanine-tRNA biosynthesis. Catalyzes the formation of N(7)-methylguanine at position 46 (m7G46) in tRNA. This chain is tRNA (guanine-N(7)-)-methyltransferase, found in Streptococcus pyogenes serotype M18 (strain MGAS8232).